The following is a 673-amino-acid chain: Sodium/myo-inositol cotransporter 2 (673 aa).

At 1 to 27 (MESATISPQPPQSDSLEAFPQKSMEPA) the chain is on the extracellular side. The chain crosses the membrane as a helical span at residues 28 to 48 (DIAVLVLYFLFVLAVGLWSTV). The Cytoplasmic segment spans residues 49 to 65 (RTKRDTVKGYFLAGGDM). The chain crosses the membrane as a helical span at residues 66 to 88 (VWWPVGASLFASNVGSGHFIGLA). Over 89–102 (GSGAAVGISVAAYE) the chain is Extracellular. A helical transmembrane segment spans residues 103-123 (LNGLFSVLMLAWVFLPIYIAG). Residues 124-148 (QVTTMPEYLRRRFGGNRISITLAVL) are Cytoplasmic-facing. Residues 149–169 (YLFIYIFTKISVDMYAGAIFI) traverse the membrane as a helical segment. Residues 170–180 (QQSLHLDLYLA) lie on the Extracellular side of the membrane. Residues 181–201 (IVGLLAITALYTVAGGLAAVI) form a helical membrane-spanning segment. Topologically, residues 202-208 (YTDALQT) are cytoplasmic. The chain crosses the membrane as a helical span at residues 209–229 (VIMLIGAFILMGYSFAAVGGM). At 230–272 (EGLKDQYFLALASNRSENSSCGLPREDAFHIFRDPLTSDLPWP) the chain is on the extracellular side. The helical transmembrane segment at 273–293 (GILFGMSIPSLWYWCTDQVIV) threads the bilayer. Residues 294 to 308 (QRSLAAKNLSHAKGG) lie on the Cytoplasmic side of the membrane. The helical transmembrane segment at 309-329 (SLMAAYLKVLPLFLMVFPGMV) threads the bilayer. Topologically, residues 330–375 (SRVLFPDQVACAHPDICQRVCSNPSGCSDIAYPKLVLELLPTGLRG) are extracellular. Residues 376 to 396 (LMMAVMVAALMSSLTSIFNSA) form a helical membrane-spanning segment. The Cytoplasmic portion of the chain corresponds to 397-418 (STIFTMDLWNHIRPRASERELM). The helical transmembrane segment at 419 to 439 (IVGRIFVFALVLVSILWIPIV) threads the bilayer. The Extracellular segment spans residues 440-446 (QASQGGQ). The chain crosses the membrane as a helical span at residues 447 to 467 (LFIYIQSISSYLQPPVAMVFI). Topologically, residues 468–479 (MGCFWKRTNEKG) are cytoplasmic. Residues 480–500 (AFSGLILGLLLGLVRLILDFV) traverse the membrane as a helical segment. Residues 501 to 521 (YAQPRCDQPDDRPAVVKDVHY) are Extracellular-facing. The helical transmembrane segment at 522 to 542 (LYFSMILSFTTLITVVTVSWF) threads the bilayer. The Cytoplasmic portion of the chain corresponds to 543–652 (TETPSKEMVS…SLEENPLVKT (110 aa)). Residues 653-673 (LLDVNCIVCISCAIFLWGYFA) form a helical membrane-spanning segment.

The protein belongs to the sodium:solute symporter (SSF) (TC 2.A.21) family.

The protein localises to the membrane. It localises to the apical cell membrane. The catalysed reaction is myo-inositol(out) + 2 Na(+)(out) = myo-inositol(in) + 2 Na(+)(in). The enzyme catalyses 1D-chiro-inositol(out) + 2 Na(+)(out) = 1D-chiro-inositol(in) + 2 Na(+)(in). It carries out the reaction D-glucose(out) + 2 Na(+)(out) = D-glucose(in) + 2 Na(+)(in). It catalyses the reaction D-xylose(out) + 2 Na(+)(out) = D-xylose(in) + 2 Na(+)(in). With respect to regulation, MI transport activity inhibited by D-chiro-inositol (DCI), phlorizin (Pz) and sodium (Na(+)). Insulin increases D-chiro-inositol uptake. In terms of biological role, involved in the sodium-dependent cotransport of myo-inositol (MI) with a Na(+):MI stoichiometry of 2:1. Exclusively responsible for apical MI transport and absorption in intestine. Can also transport D-chiro-inositol (DCI) but not L-fucose. Exhibits stereospecific cotransport of both D-glucose and D-xylose. May induce apoptosis through the TNF-alpha, PDCD1 pathway. May play a role in the regulation of MI concentration in serum, involving reabsorption in at least the proximal tubule of the kidney. The chain is Sodium/myo-inositol cotransporter 2 from Mus musculus (Mouse).